We begin with the raw amino-acid sequence, 168 residues long: Small ribosomal subunit protein uS5 (168 aa).

Positions Tyr-12–Ile-75 constitute an S5 DRBM domain.

It belongs to the universal ribosomal protein uS5 family. As to quaternary structure, part of the 30S ribosomal subunit. Contacts proteins S4 and S8.

Its function is as follows. With S4 and S12 plays an important role in translational accuracy. In terms of biological role, located at the back of the 30S subunit body where it stabilizes the conformation of the head with respect to the body. This Legionella pneumophila (strain Paris) protein is Small ribosomal subunit protein uS5.